A 502-amino-acid polypeptide reads, in one-letter code: QRTTGRDALRTNILAARAISEMIKTTYGPKGMDKMLVDALGDVTITNDGATILDKAEIQHPAAKMLVQVAKSQDSEVGDGTKRAVILAGELLKYAEELLDKNIHPTVIISGYRMAMEEALKILDQMAEPIDLNNEELLRKVARTSLTSKAVHDAREFFADIAVKAVKQVVEKRGDKNYVDLDNIQIIKKYGGALLDSMLVYGIVLDKEVVHPGMPRRVENAKIVLLDAPLEIEKPEIDAEIRINDPEQLEKFLQQEEEILMKMVDKIASVGANVVVCQKGIDEVAQHFLAKKGILAVRRVKRSDLEKLERATGGRIVSNIEDLTPEDLGYAALVEERKVGEDKMVFIEGCKNPRSVSIVIRGGLERLVDEAERSIRDALSAVADALRDGKVIPGGGAAEIELAKHIRRLATRVGGKEQLAIEAFAKALEGLAVTLVENAGLDPIDMVMKLRAAHEREDGKYLSIDLATGDLVNMREKGVIEPVSILANAIKAGTEAATIIMR.

The protein belongs to the TCP-1 chaperonin family. As to quaternary structure, forms a Heterooligomeric complex of two stacked eight-membered rings.

Functionally, molecular chaperone; binds unfolded polypeptides in vitro, and has a weak ATPase activity. The sequence is that of Thermosome subunit beta (thsB) from Desulfurococcus mucosus (Desulfurococcus mobilis).